The sequence spans 133 residues: MKTIRVSVVTPDGPVYEGDVEMVSVKAKSGELGILPGHIPLVAPLEISAARLKKDGKTSYVAVSGGFLEVRPDKVTILAQAAERAEDIDVLRAKAAKERAERRLQSQQDDIDFKRAELALKRAMNRLNVAGMK.

Belongs to the ATPase epsilon chain family. F-type ATPases have 2 components, CF(1) - the catalytic core - and CF(0) - the membrane proton channel. CF(1) has five subunits: alpha(3), beta(3), gamma(1), delta(1), epsilon(1). CF(0) has three main subunits: a, b and c.

Its subcellular location is the cell membrane. Its function is as follows. Produces ATP from ADP in the presence of a proton gradient across the membrane. This Geobacillus thermodenitrificans (strain NG80-2) protein is ATP synthase epsilon chain.